Here is a 63-residue protein sequence, read N- to C-terminus: uncharacterized protein (63 aa).

Residues 37–57 form a helical membrane-spanning segment; that stretch reads IFFPTTFDVLLLAILIFLACA.

It localises to the cell membrane. This is an uncharacterized protein from Bacillus subtilis (strain 168).